The chain runs to 609 residues: Probable ubiquitin-conjugating enzyme E2 25 (609 aa).

Disordered stretches follow at residues 70–99 (EEDEYAVGSPGDDYGYPESSPLSNSLLDPE) and 151–185 (ADKESASSSKSSHANNGNNSSKKATKASGIHSQFS). The span at 156-178 (ASSSKSSHANNGNNSSKKATKAS) shows a compositional bias: low complexity. The UBC core domain occupies 332–492 (DWAKRIQDEW…TFILSLKTMV (161 aa)). Catalysis depends on Cys-418, which acts as the Glycyl thioester intermediate.

The protein belongs to the ubiquitin-conjugating enzyme family. As to expression, expressed in seeds, pistils, siliques, hypocotyls and leaves.

It catalyses the reaction S-ubiquitinyl-[E1 ubiquitin-activating enzyme]-L-cysteine + [E2 ubiquitin-conjugating enzyme]-L-cysteine = [E1 ubiquitin-activating enzyme]-L-cysteine + S-ubiquitinyl-[E2 ubiquitin-conjugating enzyme]-L-cysteine.. The protein operates within protein modification; protein ubiquitination. In terms of biological role, accepts the ubiquitin from the E1 complex and catalyzes its covalent attachment to other proteins. The polypeptide is Probable ubiquitin-conjugating enzyme E2 25 (UBC25) (Arabidopsis thaliana (Mouse-ear cress)).